A 473-amino-acid polypeptide reads, in one-letter code: Putative sulfoquinovose importer (473 aa).

A run of 11 helical transmembrane segments spans residues 18 to 38, 45 to 65, 88 to 108, 110 to 130, 160 to 180, 187 to 207, 239 to 259, 276 to 296, 317 to 337, 380 to 400, and 415 to 435; these read AYGVGDFGSNLMLCIGTLYLL, LGMPAYYGGIIFLVAKFFTAF, PFILYASFPVALVATAQFFAT, FTLPVKTAFATVLFMLFGLFY, GGATIGLLLCTVGFMPIQALF, GYLIAAVIFSVCGLFSMWWCF, LLVLCVANLCTLAAFNIKLAI, WMGFFSMGCILIGVLLVPAAV, ILNFIWGGTSFLFVIFSCIAF, ISAALAGFLPGIMLTQIGYIP, and LIFLWPCGLAIIAALTMGFFY.

The protein belongs to the sodium:galactoside symporter (TC 2.A.2) family.

It localises to the cell inner membrane. Functionally, could be involved in sulfoquinovose import. This is Putative sulfoquinovose importer (yihO) from Salmonella typhimurium (strain LT2 / SGSC1412 / ATCC 700720).